We begin with the raw amino-acid sequence, 524 residues long: Keratin, type II cytoskeletal 72 (524 aa).

The interval 1–136 is head; it reads MSRQLNLYPG…DPEIQKVRAQ (136 aa). The coil 1A stretch occupies residues 137-172; the sequence is EREQIKALNNKFASFIDKVRFLEQQNQVLGTKWELL. The 314-residue stretch at 137 to 450 folds into the IF rod domain; it reads EREQIKALNN…KLLEGEECRM (314 aa). A linker 1 region spans residues 173 to 191; sequence QQLDLNNCKNNLEPILEGY. The coil 1B stretch occupies residues 192–283; the sequence is TSNLRKQLEM…CLYEGEIAQL (92 aa). The segment at 284 to 307 is linker 12; that stretch reads QSHISDTSVILSMDNNRDLDLDSI. Residues 308-446 are coil 2; sequence IAQVRAQYEE…ATYRKLLEGE (139 aa). Positions 447–524 are tail; it reads ECRMSGEYPN…SSCATKKASR (78 aa). The tract at residues 495 to 524 is disordered; sequence KTKGSCGGSELKDAPAKTSGSSCATKKASR.

This sequence belongs to the intermediate filament family. As to quaternary structure, heterotetramer of two type I and two type II keratins.

Has a role in hair formation. Specific component of keratin intermediate filaments in the inner root sheath (IRS) of the hair follicle. The chain is Keratin, type II cytoskeletal 72 (KRT72) from Bos taurus (Bovine).